The sequence spans 317 residues: NAC domain-containing protein 55 (317 aa).

The NAC domain occupies 14–162 (LPPGFRFYPT…DWVLCRIYKK (149 aa)). A DNA-binding region spans residues 111–168 (VGIKKALVFYIGKAPKGTKTNWIMHEYRLIEPSRRNGSTKLDDWVLCRIYKKQTSAQK).

In terms of tissue distribution, expressed in leaves.

It is found in the nucleus. In terms of biological role, transcription factors that bind specifically to the 5'-CATGTG-3' motif. The sequence is that of NAC domain-containing protein 55 (NAC055) from Arabidopsis thaliana (Mouse-ear cress).